The following is a 547-amino-acid chain: CTP synthase (547 aa).

Positions 1 to 265 are amidoligase domain; that stretch reads MTKFVFVTGG…DRIVCEKLAL (265 aa). CTP is bound at residue S13. S13 lines the UTP pocket. ATP contacts are provided by residues 14 to 19 and D71; that span reads SLGKGI. The Mg(2+) site is built by D71 and E139. Residues 146–148, 186–191, and K222 contribute to the CTP site; these read DIE and KTKPTQ. UTP-binding positions include 186–191 and K222; that span reads KTKPTQ. Residues 290 to 542 enclose the Glutamine amidotransferase type-1 domain; it reads TIGMVGKYVD…IKAALAHKHA (253 aa). G351 is an L-glutamine binding site. C378 acts as the Nucleophile; for glutamine hydrolysis in catalysis. L-glutamine is bound by residues 379–382, E402, and R468; that span reads LGMQ. Residues H515 and E517 contribute to the active site.

Belongs to the CTP synthase family. Homotetramer.

The enzyme catalyses UTP + L-glutamine + ATP + H2O = CTP + L-glutamate + ADP + phosphate + 2 H(+). The catalysed reaction is L-glutamine + H2O = L-glutamate + NH4(+). It carries out the reaction UTP + NH4(+) + ATP = CTP + ADP + phosphate + 2 H(+). The protein operates within pyrimidine metabolism; CTP biosynthesis via de novo pathway; CTP from UDP: step 2/2. With respect to regulation, allosterically activated by GTP, when glutamine is the substrate; GTP has no effect on the reaction when ammonia is the substrate. The allosteric effector GTP functions by stabilizing the protein conformation that binds the tetrahedral intermediate(s) formed during glutamine hydrolysis. Inhibited by the product CTP, via allosteric rather than competitive inhibition. Its function is as follows. Catalyzes the ATP-dependent amination of UTP to CTP with either L-glutamine or ammonia as the source of nitrogen. Regulates intracellular CTP levels through interactions with the four ribonucleotide triphosphates. This chain is CTP synthase, found in Janthinobacterium sp. (strain Marseille) (Minibacterium massiliensis).